A 137-amino-acid polypeptide reads, in one-letter code: Ribosome-binding factor A (137 aa).

The protein belongs to the RbfA family. As to quaternary structure, monomer. Binds 30S ribosomal subunits, but not 50S ribosomal subunits or 70S ribosomes.

It is found in the cytoplasm. One of several proteins that assist in the late maturation steps of the functional core of the 30S ribosomal subunit. Associates with free 30S ribosomal subunits (but not with 30S subunits that are part of 70S ribosomes or polysomes). Required for efficient processing of 16S rRNA. May interact with the 5'-terminal helix region of 16S rRNA. The protein is Ribosome-binding factor A of Shewanella amazonensis (strain ATCC BAA-1098 / SB2B).